The following is a 621-amino-acid chain: Chaperone protein HtpG (621 aa).

The interval 1–325 is a; substrate-binding; sequence MTDASVKETF…SQDLSLNVSR (325 aa). Residues 326 to 541 are b; the sequence is EMLQSDPKLA…EGDIDVNLER (216 aa). The interval 542 to 621 is c; sequence MLKRHGQLQD…RLGSVMDSAL (80 aa).

This sequence belongs to the heat shock protein 90 family. As to quaternary structure, homodimer.

Its subcellular location is the cytoplasm. Its function is as follows. Molecular chaperone. Has ATPase activity. This is Chaperone protein HtpG from Roseobacter denitrificans (strain ATCC 33942 / OCh 114) (Erythrobacter sp. (strain OCh 114)).